We begin with the raw amino-acid sequence, 469 residues long: 3-isopropylmalate dehydratase large subunit (469 aa).

Positions 347, 407, and 410 each coordinate [4Fe-4S] cluster.

The protein belongs to the aconitase/IPM isomerase family. LeuC type 1 subfamily. Heterodimer of LeuC and LeuD. [4Fe-4S] cluster serves as cofactor.

The catalysed reaction is (2R,3S)-3-isopropylmalate = (2S)-2-isopropylmalate. It participates in amino-acid biosynthesis; L-leucine biosynthesis; L-leucine from 3-methyl-2-oxobutanoate: step 2/4. Its function is as follows. Catalyzes the isomerization between 2-isopropylmalate and 3-isopropylmalate, via the formation of 2-isopropylmaleate. The sequence is that of 3-isopropylmalate dehydratase large subunit from Prochlorococcus marinus subsp. pastoris (strain CCMP1986 / NIES-2087 / MED4).